A 248-amino-acid polypeptide reads, in one-letter code: 3-deoxy-manno-octulosonate cytidylyltransferase (248 aa).

Belongs to the KdsB family.

It is found in the cytoplasm. The enzyme catalyses 3-deoxy-alpha-D-manno-oct-2-ulosonate + CTP = CMP-3-deoxy-beta-D-manno-octulosonate + diphosphate. Its pathway is nucleotide-sugar biosynthesis; CMP-3-deoxy-D-manno-octulosonate biosynthesis; CMP-3-deoxy-D-manno-octulosonate from 3-deoxy-D-manno-octulosonate and CTP: step 1/1. It functions in the pathway bacterial outer membrane biogenesis; lipopolysaccharide biosynthesis. Activates KDO (a required 8-carbon sugar) for incorporation into bacterial lipopolysaccharide in Gram-negative bacteria. In Escherichia fergusonii (strain ATCC 35469 / DSM 13698 / CCUG 18766 / IAM 14443 / JCM 21226 / LMG 7866 / NBRC 102419 / NCTC 12128 / CDC 0568-73), this protein is 3-deoxy-manno-octulosonate cytidylyltransferase.